The chain runs to 166 residues: Phosphopantetheine adenylyltransferase (166 aa).

Residue threonine 11 coordinates substrate. ATP contacts are provided by residues 11–12 (TF) and histidine 19. Residues lysine 43, threonine 79, and arginine 93 each coordinate substrate. ATP contacts are provided by residues glutamate 104 and 128–134 (LEPLNST).

It belongs to the bacterial CoaD family. Homohexamer. Requires Mg(2+) as cofactor.

It is found in the cytoplasm. The catalysed reaction is (R)-4'-phosphopantetheine + ATP + H(+) = 3'-dephospho-CoA + diphosphate. It participates in cofactor biosynthesis; coenzyme A biosynthesis; CoA from (R)-pantothenate: step 4/5. Reversibly transfers an adenylyl group from ATP to 4'-phosphopantetheine, yielding dephospho-CoA (dPCoA) and pyrophosphate. In Lactococcus lactis subsp. cremoris (strain MG1363), this protein is Phosphopantetheine adenylyltransferase.